Consider the following 319-residue polypeptide: Methionyl-tRNA formyltransferase (319 aa).

Residue 110–113 coordinates (6S)-5,6,7,8-tetrahydrofolate; it reads SLLP.

It belongs to the Fmt family.

It carries out the reaction L-methionyl-tRNA(fMet) + (6R)-10-formyltetrahydrofolate = N-formyl-L-methionyl-tRNA(fMet) + (6S)-5,6,7,8-tetrahydrofolate + H(+). Attaches a formyl group to the free amino group of methionyl-tRNA(fMet). The formyl group appears to play a dual role in the initiator identity of N-formylmethionyl-tRNA by promoting its recognition by IF2 and preventing the misappropriation of this tRNA by the elongation apparatus. The sequence is that of Methionyl-tRNA formyltransferase from Geobacillus thermodenitrificans (strain NG80-2).